We begin with the raw amino-acid sequence, 190 residues long: Guanylate kinase (190 aa).

Residues 3–185 (NYIFIISAPS…SLEQLCKYFE (183 aa)) enclose the Guanylate kinase-like domain. Residue 10–17 (APSGAGKS) participates in ATP binding.

This sequence belongs to the guanylate kinase family.

The protein resides in the cytoplasm. It catalyses the reaction GMP + ATP = GDP + ADP. Essential for recycling GMP and indirectly, cGMP. The protein is Guanylate kinase of Francisella tularensis subsp. holarctica (strain LVS).